The sequence spans 258 residues: Chymotrypsin-2 (258 aa).

The N-terminal stretch at 1 to 17 (MLRKVFAVVSVLLVVSA) is a signal peptide. Residues 18–32 (AKVTKLVLDDHYVNR) constitute a propeptide, activation peptide. The Peptidase S1 domain occupies 33–255 (VVGGEVAKNG…YHEWVRTTMA (223 aa)). Cys59 and Cys75 are disulfide-bonded. Active-site charge relay system residues include His74 and Asp119. 2 disulfide bridges follow: Cys182–Cys198 and Cys208–Cys232. The Charge relay system role is filled by Ser212.

It belongs to the peptidase S1 family. In terms of tissue distribution, after blood feeding, expression is induced in the midgut epithelium, followed by secretion into the midgut lumen.

It is found in the secreted. It carries out the reaction Preferential cleavage: Tyr-|-Xaa, Trp-|-Xaa, Phe-|-Xaa, Leu-|-Xaa.. The polypeptide is Chymotrypsin-2 (CHYM2) (Anopheles gambiae (African malaria mosquito)).